The sequence spans 415 residues: Serine hydroxymethyltransferase (415 aa).

(6S)-5,6,7,8-tetrahydrofolate contacts are provided by residues L117 and 121 to 123 (GHL). An N6-(pyridoxal phosphate)lysine modification is found at K225. 349-351 (SPF) lines the (6S)-5,6,7,8-tetrahydrofolate pocket.

Belongs to the SHMT family. As to quaternary structure, homodimer. It depends on pyridoxal 5'-phosphate as a cofactor.

The protein localises to the cytoplasm. The enzyme catalyses (6R)-5,10-methylene-5,6,7,8-tetrahydrofolate + glycine + H2O = (6S)-5,6,7,8-tetrahydrofolate + L-serine. It participates in one-carbon metabolism; tetrahydrofolate interconversion. The protein operates within amino-acid biosynthesis; glycine biosynthesis; glycine from L-serine: step 1/1. Functionally, catalyzes the reversible interconversion of serine and glycine with tetrahydrofolate (THF) serving as the one-carbon carrier. This reaction serves as the major source of one-carbon groups required for the biosynthesis of purines, thymidylate, methionine, and other important biomolecules. Also exhibits THF-independent aldolase activity toward beta-hydroxyamino acids, producing glycine and aldehydes, via a retro-aldol mechanism. The sequence is that of Serine hydroxymethyltransferase from Nitratiruptor sp. (strain SB155-2).